We begin with the raw amino-acid sequence, 232 residues long: MTEERRSRATEAFFGRRKGKPLRNQQVDTIENLLPLLKIDLESVPPQNLVALFPADVRSIRLEIGFGGGEHLAHRAVENPETGFIGVEPFVNSMAKLLATVRERELMNIRLYDDDATQLLDWLPEGSIDHIDLLYPDPWPKKKHWKRRFVSDVNLARFHRVLKPGGKFCFASDIDTYVNWTLQHCARHGGFEWTATSADDWRTPYANWPGTRYENKAKREGRSSAYLTFIRR.

4 residues coordinate S-adenosyl-L-methionine: Glu-63, Glu-88, Asp-115, and Asp-137. Asp-137 is a catalytic residue. Substrate is bound by residues Lys-141, Asp-173, and 211–214; that span reads TRYE.

Belongs to the class I-like SAM-binding methyltransferase superfamily. TrmB family.

It carries out the reaction guanosine(46) in tRNA + S-adenosyl-L-methionine = N(7)-methylguanosine(46) in tRNA + S-adenosyl-L-homocysteine. It functions in the pathway tRNA modification; N(7)-methylguanine-tRNA biosynthesis. Its function is as follows. Catalyzes the formation of N(7)-methylguanine at position 46 (m7G46) in tRNA. The chain is tRNA (guanine-N(7)-)-methyltransferase from Agrobacterium fabrum (strain C58 / ATCC 33970) (Agrobacterium tumefaciens (strain C58)).